The chain runs to 432 residues: Glutamyl-tRNA reductase (432 aa).

Substrate is bound by residues Thr49–Arg52, Ser107, Glu112–Gln114, and Gln118. Cys50 (nucleophile) is an active-site residue. Gly186–Gly191 contacts NADP(+).

This sequence belongs to the glutamyl-tRNA reductase family. Homodimer.

The catalysed reaction is (S)-4-amino-5-oxopentanoate + tRNA(Glu) + NADP(+) = L-glutamyl-tRNA(Glu) + NADPH + H(+). It functions in the pathway porphyrin-containing compound metabolism; protoporphyrin-IX biosynthesis; 5-aminolevulinate from L-glutamyl-tRNA(Glu): step 1/2. Catalyzes the NADPH-dependent reduction of glutamyl-tRNA(Glu) to glutamate 1-semialdehyde (GSA). In Campylobacter jejuni subsp. doylei (strain ATCC BAA-1458 / RM4099 / 269.97), this protein is Glutamyl-tRNA reductase.